The following is a 118-amino-acid chain: Hydrogenase maturation factor HypA (118 aa).

Position 2 (H2) interacts with Ni(2+). Zn(2+) contacts are provided by C73, C76, C89, and C92.

This sequence belongs to the HypA/HybF family.

Involved in the maturation of [NiFe] hydrogenases. Required for nickel insertion into the metal center of the hydrogenase. This is Hydrogenase maturation factor HypA from Shewanella sp. (strain MR-7).